The primary structure comprises 395 residues: Dihydroorotate dehydrogenase (quinone), mitochondrial (395 aa).

A mitochondrion; not cleaved-targeting transit peptide spans 1–10 (MAWRQLRKRA). Residues 1–10 (MAWRQLRKRA) are Mitochondrial matrix-facing. A helical membrane pass occupies residues 11–30 (LDAAIILGGGGLLFTSYLTA). Over 31-395 (TGDDHFYAEY…TDAIGVDHRR (365 aa)) the chain is Mitochondrial intermembrane. FMN-binding positions include 95–99 (AGFDK) and serine 119. Lysine 99 serves as a coordination point for substrate. 144-148 (NRYGF) contributes to the substrate binding site. The FMN site is built by asparagine 180 and asparagine 211. 211–216 (NVSSPN) is a substrate binding site. Residue serine 214 is the Nucleophile of the active site. Residues lysine 254 and threonine 282 each coordinate FMN. Position 283–284 (283–284 (NT)) interacts with substrate. FMN contacts are provided by residues glycine 305, glycine 334, and 355–356 (YT).

Belongs to the dihydroorotate dehydrogenase family. Type 2 subfamily. Monomer. FMN serves as cofactor. Post-translationally, the uncleaved transit peptide is required for mitochondrial targeting and proper membrane integration.

Its subcellular location is the mitochondrion inner membrane. It carries out the reaction (S)-dihydroorotate + a quinone = orotate + a quinol. Its pathway is pyrimidine metabolism; UMP biosynthesis via de novo pathway; orotate from (S)-dihydroorotate (quinone route): step 1/1. Its function is as follows. Catalyzes the conversion of dihydroorotate to orotate with quinone as electron acceptor. Required for UMP biosynthesis via de novo pathway. This chain is Dihydroorotate dehydrogenase (quinone), mitochondrial (Dhodh), found in Mus musculus (Mouse).